A 667-amino-acid chain; its full sequence is Smc-like protein Sph2 (667 aa).

Coiled coils occupy residues 153-295 and 355-517; these read GSIQ…SLAT and GRLD…AITA.

It belongs to the Sph1/Sph2 family.

The protein resides in the cytoplasm. May play a role in replication. This chain is Smc-like protein Sph2 (sph2), found in Halobacterium salinarum (strain ATCC 29341 / DSM 671 / R1).